A 235-amino-acid chain; its full sequence is Uridylate kinase (235 aa).

An ATP-binding site is contributed by 9 to 12 (KLSG). Residue G51 coordinates UMP. ATP is bound by residues G52 and R56. UMP-binding positions include D71 and 132–139 (TGNPYFTT). T159, Y165, and D168 together coordinate ATP.

The protein belongs to the UMP kinase family. In terms of assembly, homohexamer.

The protein resides in the cytoplasm. The enzyme catalyses UMP + ATP = UDP + ADP. It participates in pyrimidine metabolism; CTP biosynthesis via de novo pathway; UDP from UMP (UMPK route): step 1/1. With respect to regulation, inhibited by UTP. Catalyzes the reversible phosphorylation of UMP to UDP. In Cytophaga hutchinsonii (strain ATCC 33406 / DSM 1761 / CIP 103989 / NBRC 15051 / NCIMB 9469 / D465), this protein is Uridylate kinase.